A 304-amino-acid polypeptide reads, in one-letter code: Uricase (304 aa).

At alanine 2 the chain carries N-acetylalanine. Lysine 10 and lysine 23 each carry N6-acetyllysine; alternate. N6-succinyllysine; alternate occurs at positions 10 and 23. Lysine 23 functions as the Charge relay system in the catalytic mechanism. 2 positions are modified to N6-acetyllysine: lysine 27 and lysine 36. Phosphoserine occurs at positions 39 and 63. The Charge relay system role is filled by threonine 68. Urate contacts are provided by threonine 68 and aspartate 69. N6-acetyllysine occurs at positions 118, 122, and 164. Phenylalanine 170 contributes to the urate binding site. 2 positions are modified to N6-acetyllysine: lysine 175 and lysine 185. Arginine 187 provides a ligand contact to urate. Lysine 221 and lysine 228 each carry N6-acetyllysine; alternate. Lysine 221 and lysine 228 each carry N6-succinyllysine; alternate. Phosphoserine is present on serine 232. Residues valine 235, glutamine 236, and asparagine 262 each coordinate urate. Histidine 264 acts as the Charge relay system in catalysis. Lysine 278 carries the N6-acetyllysine modification. A Phosphotyrosine modification is found at tyrosine 289. Residues 302 to 304 (SRL) carry the Microbody targeting signal motif.

Belongs to the uricase family.

The protein localises to the peroxisome. It catalyses the reaction urate + O2 + H2O = 5-hydroxyisourate + H2O2. The protein operates within purine metabolism; urate degradation; (S)-allantoin from urate: step 1/3. Its function is as follows. Catalyzes the oxidation of uric acid to 5-hydroxyisourate, which is further processed to form (S)-allantoin. This Macaca fascicularis (Crab-eating macaque) protein is Uricase (UOX).